The following is a 107-amino-acid chain: Guanylate cyclase activator 2B (107 aa).

The first 21 residues, 1-21 (MSGSQLWAAVVVLLLLQSAQG), serve as a signal peptide directing secretion. The propeptide occupies 22-92 (VYIKYHGFQV…STFKALRTIA (71 aa)). Cystine bridges form between Cys-63–Cys-76, Cys-96–Cys-104, and Cys-99–Cys-107.

Belongs to the guanylin family.

It is found in the secreted. Functionally, endogenous activator of intestinal guanylate cyclase. It stimulates this enzyme through the same receptor binding region as the heat-stable enterotoxins. May be a potent physiological regulator of intestinal fluid and electrolyte transport. May be an autocrine/paracrine regulator of intestinal salt and water transport. This is Guanylate cyclase activator 2B (GUCA2B) from Notomys alexis (Spinifex hopping mouse).